Here is a 434-residue protein sequence, read N- to C-terminus: Alpha-enolase (434 aa).

Mg(2+) is bound at residue Ser-40. 2 residues coordinate substrate: His-158 and Glu-167. The active-site Proton donor is the Glu-210. Mg(2+) contacts are provided by Asp-245, Glu-293, and Asp-318. Positions 293 and 318 each coordinate substrate. Lys-343 (proton acceptor) is an active-site residue. Substrate contacts are provided by residues 370 to 373 and Lys-394; that span reads SHRS.

It belongs to the enolase family. In terms of assembly, homodimer. The cofactor is Mg(2+).

The protein localises to the cytoplasm. It catalyses the reaction (2R)-2-phosphoglycerate = phosphoenolpyruvate + H2O. Its pathway is carbohydrate degradation; glycolysis; pyruvate from D-glyceraldehyde 3-phosphate: step 4/5. In Gallus gallus (Chicken), this protein is Alpha-enolase (ENO1).